Reading from the N-terminus, the 117-residue chain is Large ribosomal subunit protein bL20 (117 aa).

The protein belongs to the bacterial ribosomal protein bL20 family.

Binds directly to 23S ribosomal RNA and is necessary for the in vitro assembly process of the 50S ribosomal subunit. It is not involved in the protein synthesizing functions of that subunit. This is Large ribosomal subunit protein bL20 from Pelotomaculum thermopropionicum (strain DSM 13744 / JCM 10971 / SI).